The chain runs to 194 residues: Adenylate kinase isoenzyme 1 (194 aa).

The residue at position 1 (Met-1) is an N-acetylmethionine. 18 to 23 (GSGKGT) contributes to the ATP binding site. Phosphoserine is present on Ser-38. The NMP stretch occupies residues 38-67 (STGDLLRAEVSSGSARGKMLSEIMEKGQLV). Residues Thr-39, Arg-44, 65 to 67 (QLV), 94 to 97 (GYPR), and Gln-101 each bind AMP. Positions 131 to 141 (KRGETSGRVDD) are LID. Position 132 (Arg-132) interacts with ATP. The AMP site is built by Arg-138 and Arg-149. Residue Gly-177 participates in ATP binding.

Belongs to the adenylate kinase family. AK1 subfamily. Monomer. It depends on Mg(2+) as a cofactor.

The protein localises to the cytoplasm. The catalysed reaction is a ribonucleoside 5'-phosphate + ATP = a ribonucleoside 5'-diphosphate + ADP. The enzyme catalyses AMP + ATP = 2 ADP. It carries out the reaction dAMP + ATP = dADP + ADP. It catalyses the reaction dATP + AMP = dADP + ADP. The catalysed reaction is dAMP + dATP = 2 dADP. The enzyme catalyses a 2'-deoxyribonucleoside 5'-diphosphate + ATP = a 2'-deoxyribonucleoside 5'-triphosphate + ADP. It carries out the reaction a ribonucleoside 5'-diphosphate + ATP = a ribonucleoside 5'-triphosphate + ADP. It catalyses the reaction CDP + GTP = CTP + GDP. The catalysed reaction is GDP + ATP = GTP + ADP. The enzyme catalyses UDP + ATP = UTP + ADP. It carries out the reaction GTP + UDP = UTP + GDP. It catalyses the reaction dTDP + GTP = dTTP + GDP. The catalysed reaction is dCDP + GTP = dCTP + GDP. The enzyme catalyses dGDP + ATP = dGTP + ADP. It carries out the reaction dADP + GTP = dATP + GDP. It catalyses the reaction thiamine diphosphate + ADP = thiamine triphosphate + AMP. Functionally, catalyzes the reversible transfer of the terminal phosphate group between ATP and AMP. Also displays broad nucleoside diphosphate kinase activity. Plays an important role in cellular energy homeostasis and in adenine nucleotide metabolism. Also catalyzes at a very low rate the synthesis of thiamine triphosphate (ThTP) from thiamine diphosphate (ThDP) and ADP. The polypeptide is Adenylate kinase isoenzyme 1 (Bos taurus (Bovine)).